A 394-amino-acid polypeptide reads, in one-letter code: Probable acetyl-CoA acyltransferase (394 aa).

C88 functions as the Acyl-thioester intermediate in the catalytic mechanism. Active-site proton acceptor residues include H349 and C378.

This sequence belongs to the thiolase-like superfamily. Thiolase family.

The protein resides in the cytoplasm. It carries out the reaction 2 acetyl-CoA = acetoacetyl-CoA + CoA. This is Probable acetyl-CoA acyltransferase from Staphylococcus epidermidis (strain ATCC 35984 / DSM 28319 / BCRC 17069 / CCUG 31568 / BM 3577 / RP62A).